Here is a 432-residue protein sequence, read N- to C-terminus: Ornithine decarboxylase 1A, chloroplastic (432 aa).

Lys-95 carries the N6-(pyridoxal phosphate)lysine modification. Pyridoxal 5'-phosphate contacts are provided by residues Ser-227, Gly-265, and 298-301 (EPGR). 341 to 342 (YD) provides a ligand contact to substrate. The active-site Proton donor; shared with dimeric partner is the Cys-377. Residue Asp-378 participates in substrate binding. Tyr-406 lines the pyridoxal 5'-phosphate pocket.

It belongs to the Orn/Lys/Arg decarboxylase class-II family. As to quaternary structure, homodimer. Only the dimer is catalytically active, as the active sites are constructed of residues from both monomers. Requires pyridoxal 5'-phosphate as cofactor.

The protein localises to the plastid. Its subcellular location is the chloroplast. The enzyme catalyses L-ornithine + H(+) = putrescine + CO2. Its pathway is alkaloid biosynthesis; nicotine biosynthesis. It participates in amine and polyamine biosynthesis; putrescine biosynthesis via L-ornithine pathway; putrescine from L-ornithine: step 1/1. Functionally, involved in the biosynthesis of pyridine alkaloid natural products, leading mainly to the production of anabasine, anatabine, nicotine and nornicotine, effective deterrents against herbivores with antiparasitic and pesticide properties (neurotoxins); nornicotine serves as the precursor in the synthesis of the carcinogen compound N'-nitrosonornicotine (NNN). Catalyzes the first and rate-limiting step of polyamine biosynthesis that converts ornithine into putrescine, which is the precursor for the polyamines, spermidine and spermine. Polyamines are essential for cell proliferation and are implicated in cellular processes, ranging from DNA replication to apoptosis. The sequence is that of Ornithine decarboxylase 1A, chloroplastic from Nicotiana tabacum (Common tobacco).